Reading from the N-terminus, the 178-residue chain is Protein RICE FLOWERING LOCUS T 1 (178 aa).

This sequence belongs to the phosphatidylethanolamine-binding protein family. As to quaternary structure, interacts with FTIP1. As to expression, expressed in leaf vascular tissues. Specifically expressed in the phloem including companion cells.

Its subcellular location is the cytoplasm. The protein localises to the nucleus. It is found in the endoplasmic reticulum. Its function is as follows. Probable mobile flower-promoting signal (florigen) that moves from the leaf to the shoot apical meristem (SAM) and induces flowering. Promotes the transition from vegetative growth to flowering under long day (LD) conditions. Acts upstream of MADS14 and MADS15. May also participate in the promotion of flowering under short day (SD) conditions. This Oryza sativa subsp. japonica (Rice) protein is Protein RICE FLOWERING LOCUS T 1.